Here is a 169-residue protein sequence, read N- to C-terminus: Monothiol glutaredoxin-S15, mitochondrial (169 aa).

The N-terminal 37 residues, 1–37 (MAASLSSRLIKGIANLKAVRSSRLTSASVYQNGMMRF), are a transit peptide targeting the mitochondrion. A disordered region spans residues 38 to 61 (SSTVPSDSDTHDDFKPTQKVPPDS). The region spanning 66–168 (KDIVENDVKD…QKLKDVSGNQ (103 aa)) is the Glutaredoxin domain. Residue Lys-83 coordinates glutathione. A [2Fe-2S] cluster-binding site is contributed by Cys-91. Glutathione-binding positions include Lys-120, Phe-132, and 145–146 (SD).

Belongs to the glutaredoxin family. CGFS subfamily. In terms of assembly, [2Fe-2S]-bridged holo-homodimer. Interacts in vitro with SUFE1, BOLA1, BOLA2 and BOLA4. Interacts in vivo only with BOLA4.

The protein resides in the mitochondrion. Functionally, may only reduce GSH-thiol disulfides, but not protein disulfides. Participates probably to the maturation of iron-sulfur proteins and to the regulation of the redox state of the BOLA proteins. The protein is Monothiol glutaredoxin-S15, mitochondrial of Arabidopsis thaliana (Mouse-ear cress).